Reading from the N-terminus, the 354-residue chain is Trans-L-3-hydroxyproline dehydratase (354 aa).

The Proton acceptor role is filled by C104. Residues 105–106 (GH), D269, and 274–275 (GS) contribute to the substrate site.

This sequence belongs to the proline racemase family. Homodimer.

It carries out the reaction trans-3-hydroxy-L-proline = 1-pyrroline-2-carboxylate + H2O. Its function is as follows. Catalyzes the dehydration of trans-3-hydroxy-L-proline to Delta(1)-pyrroline-2-carboxylate (Pyr2C). This chain is Trans-L-3-hydroxyproline dehydratase (L3HYPDH), found in Bos taurus (Bovine).